Consider the following 327-residue polypeptide: PDZ and LIM domain protein 1 (327 aa).

T2 is subject to N-acetylthreonine. The PDZ domain maps to 3–85 (TQQIVLQGPG…NMTLTVSRSE (83 aa)). Phosphoserine is present on residues S90 and S130. Y142 is subject to Phosphotyrosine. The interval 161 to 184 (VESKTSASGEEANSRPVVQPHPSG) is disordered. The LIM zinc-binding domain occupies 256–315 (PICDKCGTGIVGVFVKLRDHHRHPECYVCTDCGINLKQKGHFFVEDQIYCEKHARERVTP). Zn(2+) contacts are provided by C258, C261, H278, C281, C284, C287, C305, and H308. T314 carries the phosphothreonine modification. Y319 carries the phosphotyrosine modification.

In terms of assembly, interacts with ACTN1, ACTN2 and ACTN4. Interacts with PDLIM4. As to expression, expressed in heart, lung, spleen, testis and skeletal muscle.

The protein resides in the cytoplasm. The protein localises to the cytoskeleton. It is found in the myofibril. It localises to the sarcomere. Its subcellular location is the z line. Its function is as follows. Cytoskeletal protein that may act as an adapter that brings other proteins (like kinases) to the cytoskeleton. Involved in assembly, disassembly and directioning of stress fibers in fibroblasts. Required for the localization of ACTN1 and PALLD to stress fibers. Required for cell migration and in maintaining cell polarity of fibroblasts. The protein is PDZ and LIM domain protein 1 (Pdlim1) of Mus musculus (Mouse).